The chain runs to 188 residues: Elongation factor P (188 aa).

Residue K34 is modified to N6-(3,6-diaminohexanoyl)-5-hydroxylysine.

The protein belongs to the elongation factor P family. May be beta-lysylated on the epsilon-amino group of Lys-34 by the combined action of EpmA and EpmB, and then hydroxylated on the C5 position of the same residue by EpmC (if this protein is present). Lysylation is critical for the stimulatory effect of EF-P on peptide-bond formation. The lysylation moiety may extend toward the peptidyltransferase center and stabilize the terminal 3-CCA end of the tRNA. Hydroxylation of the C5 position on Lys-34 may allow additional potential stabilizing hydrogen-bond interactions with the P-tRNA.

The protein resides in the cytoplasm. Its pathway is protein biosynthesis; polypeptide chain elongation. Its function is as follows. Involved in peptide bond synthesis. Alleviates ribosome stalling that occurs when 3 or more consecutive Pro residues or the sequence PPG is present in a protein, possibly by augmenting the peptidyl transferase activity of the ribosome. Modification of Lys-34 is required for alleviation. In Vibrio atlanticus (strain LGP32) (Vibrio splendidus (strain Mel32)), this protein is Elongation factor P.